The primary structure comprises 228 residues: UPF0173 metal-dependent hydrolase Smar_0891 (228 aa).

Belongs to the UPF0173 family.

The sequence is that of UPF0173 metal-dependent hydrolase Smar_0891 from Staphylothermus marinus (strain ATCC 43588 / DSM 3639 / JCM 9404 / F1).